The sequence spans 206 residues: ATP-dependent Clp protease proteolytic subunit (206 aa).

Residue serine 107 is the Nucleophile of the active site. Histidine 132 is a catalytic residue.

It belongs to the peptidase S14 family. Fourteen ClpP subunits assemble into 2 heptameric rings which stack back to back to give a disk-like structure with a central cavity, resembling the structure of eukaryotic proteasomes.

Its subcellular location is the cytoplasm. The enzyme catalyses Hydrolysis of proteins to small peptides in the presence of ATP and magnesium. alpha-casein is the usual test substrate. In the absence of ATP, only oligopeptides shorter than five residues are hydrolyzed (such as succinyl-Leu-Tyr-|-NHMec, and Leu-Tyr-Leu-|-Tyr-Trp, in which cleavage of the -Tyr-|-Leu- and -Tyr-|-Trp bonds also occurs).. Cleaves peptides in various proteins in a process that requires ATP hydrolysis. Has a chymotrypsin-like activity. Plays a major role in the degradation of misfolded proteins. This is ATP-dependent Clp protease proteolytic subunit from Idiomarina loihiensis (strain ATCC BAA-735 / DSM 15497 / L2-TR).